A 587-amino-acid polypeptide reads, in one-letter code: Mitochondrial ribonuclease P catalytic subunit (587 aa).

The N-terminal 46 residues, 1–46 (MTFYLSGFRSFLKLWKSNPYFELGPATSSASFFLGVHCVIGNQQRW), are a transit peptide targeting the mitochondrion. Residues 94 to 114 (KRSHLSGNPQNQGHTLPVKST) are disordered. Positions 98–114 (LSGNPQNQGHTLPVKST) are enriched in polar residues. The PRORP domain occupies 342–578 (IQKSGQCSSC…SCEVPTKWLC (237 aa)). Zn(2+) contacts are provided by C348 and C351. Mg(2+) contacts are provided by D409, D478, D479, and D499. Zn(2+)-binding residues include H557 and C578.

The protein belongs to the PPR family. P subfamily. As to quaternary structure, catalytic component of mitochondrial ribonuclease P, a complex composed of TRMT10C/MRPP1, HSD17B10/MRPP2 and PRORP/MRPP3. Mg(2+) is required as a cofactor. Mn(2+) serves as cofactor. Post-translationally, degraded by LONP1 following mitochondrial unfolded protein response, probably leading to inhibit translation in mitochondrion.

It is found in the mitochondrion. The catalysed reaction is Endonucleolytic cleavage of RNA, removing 5'-extranucleotides from tRNA precursor.. Its function is as follows. Catalytic ribonuclease component of mitochondrial ribonuclease P, a complex composed of TRMT10C/MRPP1, HSD17B10/MRPP2 and PRORP/MRPP3, which cleaves tRNA molecules in their 5'-ends. The presence of TRMT10C/MRPP1, HSD17B10/MRPP2 is required to catalyze tRNA molecules in their 5'-ends. The sequence is that of Mitochondrial ribonuclease P catalytic subunit (Prorp) from Rattus norvegicus (Rat).